Consider the following 310-residue polypeptide: Lipoyl synthase (310 aa).

[4Fe-4S] cluster contacts are provided by C41, C46, C52, C68, C72, C75, and S281. Residues 54–270 (GERRTATFMI…RKVAMEKGFK (217 aa)) form the Radical SAM core domain. The disordered stretch occupies residues 285–310 (DEQVNEAAKERQRIGDEKLEAAKNEA).

It belongs to the radical SAM superfamily. Lipoyl synthase family. It depends on [4Fe-4S] cluster as a cofactor.

Its subcellular location is the cytoplasm. The enzyme catalyses [[Fe-S] cluster scaffold protein carrying a second [4Fe-4S](2+) cluster] + N(6)-octanoyl-L-lysyl-[protein] + 2 oxidized [2Fe-2S]-[ferredoxin] + 2 S-adenosyl-L-methionine + 4 H(+) = [[Fe-S] cluster scaffold protein] + N(6)-[(R)-dihydrolipoyl]-L-lysyl-[protein] + 4 Fe(3+) + 2 hydrogen sulfide + 2 5'-deoxyadenosine + 2 L-methionine + 2 reduced [2Fe-2S]-[ferredoxin]. It functions in the pathway protein modification; protein lipoylation via endogenous pathway; protein N(6)-(lipoyl)lysine from octanoyl-[acyl-carrier-protein]. Functionally, catalyzes the radical-mediated insertion of two sulfur atoms into the C-6 and C-8 positions of the octanoyl moiety bound to the lipoyl domains of lipoate-dependent enzymes, thereby converting the octanoylated domains into lipoylated derivatives. The chain is Lipoyl synthase from Staphylococcus carnosus (strain TM300).